The sequence spans 517 residues: UPF0522 protein B (517 aa).

An N-terminal signal peptide occupies residues Met1–Ser19. 8 N-linked (GlcNAc...) asparagine glycosylation sites follow: Asn148, Asn245, Asn333, Asn345, Asn370, Asn423, Asn432, and Asn495.

Belongs to the UPF0522 family.

The protein localises to the secreted. This is UPF0522 protein B from Dictyostelium discoideum (Social amoeba).